Here is a 255-residue protein sequence, read N- to C-terminus: Hydroxyacylglutathione hydrolase (255 aa).

Zn(2+)-binding residues include His55, His57, Asp59, His60, His112, Asp129, and His167.

Belongs to the metallo-beta-lactamase superfamily. Glyoxalase II family. As to quaternary structure, monomer. It depends on Zn(2+) as a cofactor.

It carries out the reaction an S-(2-hydroxyacyl)glutathione + H2O = a 2-hydroxy carboxylate + glutathione + H(+). The protein operates within secondary metabolite metabolism; methylglyoxal degradation; (R)-lactate from methylglyoxal: step 2/2. Its function is as follows. Thiolesterase that catalyzes the hydrolysis of S-D-lactoyl-glutathione to form glutathione and D-lactic acid. This is Hydroxyacylglutathione hydrolase from Halorhodospira halophila (strain DSM 244 / SL1) (Ectothiorhodospira halophila (strain DSM 244 / SL1)).